Reading from the N-terminus, the 115-residue chain is NADH-ubiquinone oxidoreductase chain 3 (115 aa).

Transmembrane regions (helical) follow at residues 4–24, 55–75, and 84–104; these read MLAM…AFWL, FFLV…LLPL, and MITT…GLSY.

The protein belongs to the complex I subunit 3 family. In terms of assembly, core subunit of respiratory chain NADH dehydrogenase (Complex I) which is composed of 45 different subunits. Interacts with TMEM186. Interacts with TMEM242.

Its subcellular location is the mitochondrion inner membrane. It carries out the reaction a ubiquinone + NADH + 5 H(+)(in) = a ubiquinol + NAD(+) + 4 H(+)(out). Functionally, core subunit of the mitochondrial membrane respiratory chain NADH dehydrogenase (Complex I) which catalyzes electron transfer from NADH through the respiratory chain, using ubiquinone as an electron acceptor. Essential for the catalytic activity of complex I. The protein is NADH-ubiquinone oxidoreductase chain 3 of Reithrodon auritus (Bunny rat).